A 347-amino-acid chain; its full sequence is S-adenosylmethionine:tRNA ribosyltransferase-isomerase (347 aa).

The protein belongs to the QueA family. In terms of assembly, monomer.

It localises to the cytoplasm. The enzyme catalyses 7-aminomethyl-7-carbaguanosine(34) in tRNA + S-adenosyl-L-methionine = epoxyqueuosine(34) in tRNA + adenine + L-methionine + 2 H(+). The protein operates within tRNA modification; tRNA-queuosine biosynthesis. Transfers and isomerizes the ribose moiety from AdoMet to the 7-aminomethyl group of 7-deazaguanine (preQ1-tRNA) to give epoxyqueuosine (oQ-tRNA). The protein is S-adenosylmethionine:tRNA ribosyltransferase-isomerase of Erythrobacter litoralis (strain HTCC2594).